Reading from the N-terminus, the 148-residue chain is Putative transmembrane protein ORF23 (148 aa).

The signal sequence occupies residues 1 to 18; sequence MVIILLGVSIVVPGLFLA. Residues 19-118 lie on the Extracellular side of the membrane; it reads TETPQTNTFE…YVGWPSGAET (100 aa). The chain crosses the membrane as a helical span at residues 119 to 139; the sequence is IITNIADIIIMATAVMIIGAI. Residues 140–148 lie on the Cytoplasmic side of the membrane; the sequence is YTGYKVSIK.

The protein localises to the host membrane. This His1 virus (isolate Australia/Victoria) (His1V) protein is Putative transmembrane protein ORF23.